Here is a 447-residue protein sequence, read N- to C-terminus: Multidrug efflux pump SdrM (447 aa).

14 consecutive transmembrane segments (helical) span residues 6–26 (IITV…SSII), 42–62 (LISL…PIVG), 70–90 (IIYV…MCGL), 94–114 (FTML…LMSL), 134–154 (IVGS…GGIL), 161–181 (WLFY…IWTF), 194–214 (FDTK…FALL), 217–237 (QLLL…MCLF), 260–280 (VFIT…YIPV), 286–306 (LGLS…AWIT), 323–342 (IYLL…SFGI), 346–363 (VLIA…GYIY), 392–412 (LGAS…SGIF), and 418–438 (NVLS…VVFF).

It belongs to the major facilitator superfamily.

It is found in the cell membrane. Its function is as follows. Energy-dependent drug efflux pump that increases resistance to antimicrobial agents such as norfloxacin, acriflavine and ethidium bromide. In Staphylococcus aureus (strain N315), this protein is Multidrug efflux pump SdrM.